Here is a 383-residue protein sequence, read N- to C-terminus: Sterol 24-C-methyltransferase ERG6 (383 aa).

At S2 the chain carries N-acetylserine. S99 bears the Phosphoserine mark.

Belongs to the class I-like SAM-binding methyltransferase superfamily. Erg6/SMT family. As to quaternary structure, interacts with ERG28.

The protein localises to the microsome. It localises to the mitochondrion. The catalysed reaction is zymosterol + S-adenosyl-L-methionine = fecosterol + S-adenosyl-L-homocysteine + H(+). Its pathway is steroid metabolism; ergosterol biosynthesis; ergosterol from zymosterol: step 1/5. Sterol 24-C-methyltransferase; part of the third module of ergosterol biosynthesis pathway that includes the late steps of the pathway. ERG6 catalyzes the methyl transfer from S-adenosyl-methionine to the C-24 of zymosterol to form fecosterol. The third module or late pathway involves the ergosterol synthesis itself through consecutive reactions that mainly occur in the endoplasmic reticulum (ER) membrane. Firstly, the squalene synthase ERG9 catalyzes the condensation of 2 farnesyl pyrophosphate moieties to form squalene, which is the precursor of all steroids. Squalene synthase is crucial for balancing the incorporation of farnesyl diphosphate (FPP) into sterol and nonsterol isoprene synthesis. Secondly, the squalene epoxidase ERG1 catalyzes the stereospecific oxidation of squalene to (S)-2,3-epoxysqualene, which is considered to be a rate-limiting enzyme in steroid biosynthesis. Then, the lanosterol synthase ERG7 catalyzes the cyclization of (S)-2,3 oxidosqualene to lanosterol, a reaction that forms the sterol core. In the next steps, lanosterol is transformed to zymosterol through a complex process involving various demethylation, reduction and desaturation reactions. The lanosterol 14-alpha-demethylase ERG11 (also known as CYP51) catalyzes C14-demethylation of lanosterol to produce 4,4'-dimethyl cholesta-8,14,24-triene-3-beta-ol, which is critical for ergosterol biosynthesis. The C-14 reductase ERG24 reduces the C14=C15 double bond of 4,4-dimethyl-cholesta-8,14,24-trienol to produce 4,4-dimethyl-cholesta-8,24-dienol. 4,4-dimethyl-cholesta-8,24-dienol is substrate of the C-4 demethylation complex ERG25-ERG26-ERG27 in which ERG25 catalyzes the three-step monooxygenation required for the demethylation of 4,4-dimethyl and 4alpha-methylsterols, ERG26 catalyzes the oxidative decarboxylation that results in a reduction of the 3-beta-hydroxy group at the C-3 carbon to an oxo group, and ERG27 is responsible for the reduction of the keto group on the C-3. ERG28 has a role as a scaffold to help anchor ERG25, ERG26 and ERG27 to the endoplasmic reticulum and ERG29 regulates the activity of the iron-containing C4-methylsterol oxidase ERG25. Then, the sterol 24-C-methyltransferase ERG6 catalyzes the methyl transfer from S-adenosyl-methionine to the C-24 of zymosterol to form fecosterol. The C-8 sterol isomerase ERG2 catalyzes the reaction which results in unsaturation at C-7 in the B ring of sterols and thus converts fecosterol to episterol. The sterol-C5-desaturase ERG3 then catalyzes the introduction of a C-5 double bond in the B ring to produce 5-dehydroepisterol. The C-22 sterol desaturase ERG5 further converts 5-dehydroepisterol into ergosta-5,7,22,24(28)-tetraen-3beta-ol by forming the C-22(23) double bond in the sterol side chain. Finally, ergosta-5,7,22,24(28)-tetraen-3beta-ol is substrate of the C-24(28) sterol reductase ERG4 to produce ergosterol. This is Sterol 24-C-methyltransferase ERG6 from Saccharomyces cerevisiae (strain ATCC 204508 / S288c) (Baker's yeast).